Reading from the N-terminus, the 452-residue chain is tRNA modification GTPase MnmE (452 aa).

Arginine 21, glutamate 78, and lysine 118 together coordinate (6S)-5-formyl-5,6,7,8-tetrahydrofolate. Positions 214 to 375 constitute a TrmE-type G domain; that stretch reads GMKVVIAGRP…LRDHLKQAMG (162 aa). Asparagine 224 lines the K(+) pocket. GTP is bound by residues 224–229, 243–249, and 268–271; these read NAGKSS, TDIAGTT, and DTAG. Serine 228 is a Mg(2+) binding site. K(+) contacts are provided by threonine 243, isoleucine 245, and threonine 248. Threonine 249 contributes to the Mg(2+) binding site. Lysine 452 is a binding site for (6S)-5-formyl-5,6,7,8-tetrahydrofolate.

Belongs to the TRAFAC class TrmE-Era-EngA-EngB-Septin-like GTPase superfamily. TrmE GTPase family. As to quaternary structure, homodimer. Heterotetramer of two MnmE and two MnmG subunits. K(+) is required as a cofactor.

Its subcellular location is the cytoplasm. Exhibits a very high intrinsic GTPase hydrolysis rate. Involved in the addition of a carboxymethylaminomethyl (cmnm) group at the wobble position (U34) of certain tRNAs, forming tRNA-cmnm(5)s(2)U34. The protein is tRNA modification GTPase MnmE of Haemophilus influenzae (strain 86-028NP).